Reading from the N-terminus, the 288-residue chain is 4-diphosphocytidyl-2-C-methyl-D-erythritol kinase (288 aa).

The active site involves Lys13. 97 to 107 is an ATP binding site; that stretch reads PMGGGIGGGSS. Asp139 is an active-site residue.

Belongs to the GHMP kinase family. IspE subfamily.

The catalysed reaction is 4-CDP-2-C-methyl-D-erythritol + ATP = 4-CDP-2-C-methyl-D-erythritol 2-phosphate + ADP + H(+). The protein operates within isoprenoid biosynthesis; isopentenyl diphosphate biosynthesis via DXP pathway; isopentenyl diphosphate from 1-deoxy-D-xylulose 5-phosphate: step 3/6. Functionally, catalyzes the phosphorylation of the position 2 hydroxy group of 4-diphosphocytidyl-2C-methyl-D-erythritol. The chain is 4-diphosphocytidyl-2-C-methyl-D-erythritol kinase from Saccharophagus degradans (strain 2-40 / ATCC 43961 / DSM 17024).